The primary structure comprises 483 residues: MDKYIYVTGILNPNEARDEVFSVVNKGYIGPGGRSFSNRGSKYTVVWENSAARISGFTSTSQSTIDAFAYFLLKGGLTTTLSNPINCENWVRSSKDLSAFFRTLIKGKIYASRSVDSNLPKKDRDDIMEASRRLSPSDAAFCRAVSVQVGKYVDVTQNLESTIVPLRVMEIKKRRGSAHVSLPKVVSAYVDFYTNLQELLSDEVTRARTDTVSAYATDSMAFLVKMLPLTAREQWLKDVLGYLLVRRRPANFSYDVRVAWVYDVIATLKLVIRLFFNKDTPGGIKDLKPCVPIESFDPFHELSSYFSRLSYEMTTGKGGKICPEIAEKLVRRLMEENYKLRLTPVMALIIILVYYSIYGTNATRIKRRPDFLNVRIKGRVEKVSLRGVEDRAFRISEKRGINAQRVLCRYYSDLTCLARRHYGIRRNNWKTLSYVDGTLAYDTADCITSKVRNTINTADHASIIHYIKTNENQVTGTTLPHQL.

Residues 342-359 (LTPVMALIIILVYYSIYG) traverse the membrane as a helical segment.

Its subcellular location is the host membrane. This is Protein P55 from Vitis vinifera (Grape).